The sequence spans 172 residues: ATP synthase subunit b (172 aa).

A helical membrane pass occupies residues 18 to 38 (IVWSLIILVIVAVFFYKFFMP).

It belongs to the ATPase B chain family. F-type ATPases have 2 components, F(1) - the catalytic core - and F(0) - the membrane proton channel. F(1) has five subunits: alpha(3), beta(3), gamma(1), delta(1), epsilon(1). F(0) has three main subunits: a(1), b(2) and c(10-14). The alpha and beta chains form an alternating ring which encloses part of the gamma chain. F(1) is attached to F(0) by a central stalk formed by the gamma and epsilon chains, while a peripheral stalk is formed by the delta and b chains.

It localises to the cell membrane. Its function is as follows. F(1)F(0) ATP synthase produces ATP from ADP in the presence of a proton or sodium gradient. F-type ATPases consist of two structural domains, F(1) containing the extramembraneous catalytic core and F(0) containing the membrane proton channel, linked together by a central stalk and a peripheral stalk. During catalysis, ATP synthesis in the catalytic domain of F(1) is coupled via a rotary mechanism of the central stalk subunits to proton translocation. Functionally, component of the F(0) channel, it forms part of the peripheral stalk, linking F(1) to F(0). The polypeptide is ATP synthase subunit b (Bifidobacterium longum (strain DJO10A)).